The following is a 348-amino-acid chain: N-acetyl-gamma-glutamyl-phosphate reductase (348 aa).

Residue Cys150 is part of the active site.

The protein belongs to the NAGSA dehydrogenase family. Type 1 subfamily.

It localises to the cytoplasm. It catalyses the reaction N-acetyl-L-glutamate 5-semialdehyde + phosphate + NADP(+) = N-acetyl-L-glutamyl 5-phosphate + NADPH + H(+). It functions in the pathway amino-acid biosynthesis; L-arginine biosynthesis; N(2)-acetyl-L-ornithine from L-glutamate: step 3/4. Its function is as follows. Catalyzes the NADPH-dependent reduction of N-acetyl-5-glutamyl phosphate to yield N-acetyl-L-glutamate 5-semialdehyde. This Symbiobacterium thermophilum (strain DSM 24528 / JCM 14929 / IAM 14863 / T) protein is N-acetyl-gamma-glutamyl-phosphate reductase.